A 433-amino-acid chain; its full sequence is Serine carboxypeptidase-like 8 (433 aa).

The N-terminal stretch at 1 to 19 (MSLKIKFLLLLVLYHHVDS) is a signal peptide. Disulfide bonds link Cys78/Cys323, Cys241/Cys255, and Cys279/Cys289. An N-linked (GlcNAc...) asparagine glycan is attached at Asn99. The active site involves Ser173. N-linked (GlcNAc...) asparagine glycosylation is found at Asn283, Asn324, and Asn342. Residues Asp358 and His411 contribute to the active site. Asn418 carries an N-linked (GlcNAc...) asparagine glycan.

Belongs to the peptidase S10 family. N-glycosylated. In terms of tissue distribution, highly expressed in seedlings. Expressed in leaves, stems, flowers and siliques, and at low levels in roots.

It localises to the vacuole. The catalysed reaction is 1-O-(trans-sinapoyl)-beta-D-glucose + (S)-malate = sinapoyl (S)-malate + D-glucose. The enzyme catalyses 2 1-O-(trans-sinapoyl)-beta-D-glucose = 1,2-di-O-sinapoyl beta-D-glucose + D-glucose. With respect to regulation, 95% inhibition by diisopropyl fluorophosphate (DFP) and 30% by phenylmethylsulfonyl fluoride (PMSF). Its function is as follows. Involved in plants secondary metabolism. Functions as acyltransferase to form the sinapate ester sinapoylmalate. Also capable of catalyzing the formation of 1,2-bis-O-sinapoyl beta-D-glucoside. This chain is Serine carboxypeptidase-like 8, found in Arabidopsis thaliana (Mouse-ear cress).